Here is a 356-residue protein sequence, read N- to C-terminus: Peptide chain release factor 1 (356 aa).

The residue at position 233 (Gln233) is an N5-methylglutamine.

This sequence belongs to the prokaryotic/mitochondrial release factor family. Methylated by PrmC. Methylation increases the termination efficiency of RF1.

The protein localises to the cytoplasm. Functionally, peptide chain release factor 1 directs the termination of translation in response to the peptide chain termination codons UAG and UAA. This is Peptide chain release factor 1 from Endomicrobium trichonymphae.